Here is a 311-residue protein sequence, read N- to C-terminus: Aspartate carbamoyltransferase catalytic subunit (311 aa).

Positions 55 and 56 each coordinate carbamoyl phosphate. Lys85 is an L-aspartate binding site. Arg106, His135, and Gln138 together coordinate carbamoyl phosphate. Positions 168 and 230 each coordinate L-aspartate. Leu268 and Pro269 together coordinate carbamoyl phosphate.

Belongs to the aspartate/ornithine carbamoyltransferase superfamily. ATCase family. In terms of assembly, heterododecamer (2C3:3R2) of six catalytic PyrB chains organized as two trimers (C3), and six regulatory PyrI chains organized as three dimers (R2).

It catalyses the reaction carbamoyl phosphate + L-aspartate = N-carbamoyl-L-aspartate + phosphate + H(+). It functions in the pathway pyrimidine metabolism; UMP biosynthesis via de novo pathway; (S)-dihydroorotate from bicarbonate: step 2/3. Catalyzes the condensation of carbamoyl phosphate and aspartate to form carbamoyl aspartate and inorganic phosphate, the committed step in the de novo pyrimidine nucleotide biosynthesis pathway. The polypeptide is Aspartate carbamoyltransferase catalytic subunit (Salmonella paratyphi A (strain AKU_12601)).